The sequence spans 212 residues: Thiamine-phosphate synthase (212 aa).

Residues 40–44 (QFREK) and Asn75 each bind 4-amino-2-methyl-5-(diphosphooxymethyl)pyrimidine. Residues Asp76 and Asp95 each coordinate Mg(2+). Position 113 (Ser113) interacts with 4-amino-2-methyl-5-(diphosphooxymethyl)pyrimidine. Residue 139–141 (TTS) participates in 2-[(2R,5Z)-2-carboxy-4-methylthiazol-5(2H)-ylidene]ethyl phosphate binding. Lys142 provides a ligand contact to 4-amino-2-methyl-5-(diphosphooxymethyl)pyrimidine. 2-[(2R,5Z)-2-carboxy-4-methylthiazol-5(2H)-ylidene]ethyl phosphate contacts are provided by residues Gly171 and 191 to 192 (IS).

It belongs to the thiamine-phosphate synthase family. Mg(2+) is required as a cofactor.

It carries out the reaction 2-[(2R,5Z)-2-carboxy-4-methylthiazol-5(2H)-ylidene]ethyl phosphate + 4-amino-2-methyl-5-(diphosphooxymethyl)pyrimidine + 2 H(+) = thiamine phosphate + CO2 + diphosphate. It catalyses the reaction 2-(2-carboxy-4-methylthiazol-5-yl)ethyl phosphate + 4-amino-2-methyl-5-(diphosphooxymethyl)pyrimidine + 2 H(+) = thiamine phosphate + CO2 + diphosphate. The catalysed reaction is 4-methyl-5-(2-phosphooxyethyl)-thiazole + 4-amino-2-methyl-5-(diphosphooxymethyl)pyrimidine + H(+) = thiamine phosphate + diphosphate. It participates in cofactor biosynthesis; thiamine diphosphate biosynthesis; thiamine phosphate from 4-amino-2-methyl-5-diphosphomethylpyrimidine and 4-methyl-5-(2-phosphoethyl)-thiazole: step 1/1. Its function is as follows. Condenses 4-methyl-5-(beta-hydroxyethyl)thiazole monophosphate (THZ-P) and 2-methyl-4-amino-5-hydroxymethyl pyrimidine pyrophosphate (HMP-PP) to form thiamine monophosphate (TMP). This is Thiamine-phosphate synthase from Staphylococcus saprophyticus subsp. saprophyticus (strain ATCC 15305 / DSM 20229 / NCIMB 8711 / NCTC 7292 / S-41).